Here is a 321-residue protein sequence, read N- to C-terminus: Quinol oxidase subunit 2 (321 aa).

The first 25 residues, 1-25 (MIFLFRALKPLLVLALLTVVFVLGG), serve as a signal peptide directing secretion. A lipid anchor (N-palmitoyl cysteine) is attached at C26. C26 carries the S-diacylglycerol cysteine lipid modification. Helical transmembrane passes span 49-69 (SIGFMLFIVGVVFVLFTIILV) and 90-110 (TFLEVVWTVIPILIVIALSVP). The tract at residues 294 to 321 (QAVSPHSKTDPFENVKKNEFKKSDDTEE) is disordered. Over residues 300-321 (SKTDPFENVKKNEFKKSDDTEE) the composition is skewed to basic and acidic residues.

The protein belongs to the cytochrome c oxidase subunit 2 family. Interacts with FloT.

It is found in the cell membrane. The protein localises to the membrane raft. The enzyme catalyses 2 a quinol + O2 = 2 a quinone + 2 H2O. Catalyzes quinol oxidation with the concomitant reduction of oxygen to water. Major component for energy conversion during vegetative growth. Subunit II transfers the electrons from a quinol to the binuclear center of the catalytic subunit I. The polypeptide is Quinol oxidase subunit 2 (qoxA) (Bacillus subtilis (strain 168)).